Reading from the N-terminus, the 422-residue chain is Adenosylhomocysteinase (422 aa).

Positions 129 and 154 each coordinate substrate. 155 to 157 (TTT) lines the NAD(+) pocket. Lysine 184 and aspartate 188 together coordinate substrate. Residues asparagine 189, 218-223 (GYGWCG), glutamate 241, asparagine 276, 297-299 (AGH), and asparagine 344 contribute to the NAD(+) site.

The protein belongs to the adenosylhomocysteinase family. Requires NAD(+) as cofactor.

Its subcellular location is the cytoplasm. The catalysed reaction is S-adenosyl-L-homocysteine + H2O = L-homocysteine + adenosine. It participates in amino-acid biosynthesis; L-homocysteine biosynthesis; L-homocysteine from S-adenosyl-L-homocysteine: step 1/1. Its function is as follows. May play a key role in the regulation of the intracellular concentration of adenosylhomocysteine. This Pyrococcus abyssi (strain GE5 / Orsay) protein is Adenosylhomocysteinase.